Here is a 260-residue protein sequence, read N- to C-terminus: Creatinine amidohydrolase (260 aa).

E34 serves as a coordination point for Mn(2+). Zn(2+) is bound by residues E34, H36, and D45. Position 45 (D45) interacts with Mn(2+). S78 contacts creatine. H120 contacts Mn(2+). H120 contacts Zn(2+). Residues Y121, W174, D175, and H178 each contribute to the creatine site. Zn(2+) is bound at residue E183.

The protein belongs to the creatininase superfamily. Homohexamer; trimer of dimers. Requires Zn(2+) as cofactor. It depends on Mn(2+) as a cofactor.

The catalysed reaction is creatinine + H2O = creatine. It functions in the pathway amine and polyamine degradation; creatinine degradation. Is markedly inactivated in vitro by heavy metal ions, N-bromosuccinimide, ethoxyformic anhydride, and dye-sensitized photooxidation. Cyclic amidohydrolase that catalyzes the reversible conversion of creatinine to creatine. Is also active toward glycocyamidine, though the reaction rate is very low, but it is completely inert toward hydantoin and its derivatives. In Pseudomonas putida (Arthrobacter siderocapsulatus), this protein is Creatinine amidohydrolase (crnA).